Reading from the N-terminus, the 636-residue chain is ATP-dependent DNA helicase YoaA (636 aa).

The region spanning Q10–A272 is the Helicase ATP-binding domain. A45–T52 is a binding site for ATP. C108, C168, C173, and C179 together coordinate [4Fe-4S] cluster. Residues D225 to H228 carry the DEAH box motif.

This sequence belongs to the helicase family. DinG subfamily. As to quaternary structure, interacts with the DNA polymerase III subunit Chi (holC), probably as a 1:1 complex. The cofactor is [4Fe-4S] cluster. It depends on Mg(2+) as a cofactor.

It catalyses the reaction Couples ATP hydrolysis with the unwinding of duplex DNA at the replication fork by translocating in the 5'-3' direction. This creates two antiparallel DNA single strands (ssDNA). The leading ssDNA polymer is the template for DNA polymerase III holoenzyme which synthesizes a continuous strand.. It carries out the reaction ATP + H2O = ADP + phosphate + H(+). Its activity is regulated as follows. Non-hydrolyzable ATP analogs ATP-gamma-S and adenylyl-imidodiphosphate (AMP-PNP) inhibit helicase activity. In terms of biological role, DNA-dependent ATPase and 5'-3' DNA helicase. Has single-stranded (ss)DNA-dependent ATPase activity and 5'-3' helicase activity on forked DNA; both activities were measure in a YoaA:HolC (chi) complex. Requires a 20-35 nucleotide (nt) 5'-ssDNA tail; dsDNA with a 20 nt gap is also unwound. Unwinds damaged 3' nascent ends (such as those terminated by 3' azidothymidine (AZT), 3' dideoxy-C or an abasic site on the translocating strand), to promote repair and AZT excision. Without HolC the protein has much lower activity which could be due to YoaA instability or helicase stimulation by HolC. Genetically identified as involved in the repair of replication forks and tolerance of the chain-terminating nucleoside analog AZT. May act in proofreading during nucleotide misincorporation, it appears to aid in the removal of potential A-to-T transversion mutations in ndk mutants. This Escherichia coli (strain K12) protein is ATP-dependent DNA helicase YoaA (yoaA).